We begin with the raw amino-acid sequence, 287 residues long: Glycine--tRNA ligase alpha subunit (287 aa).

It belongs to the class-II aminoacyl-tRNA synthetase family. In terms of assembly, tetramer of two alpha and two beta subunits.

Its subcellular location is the cytoplasm. It catalyses the reaction tRNA(Gly) + glycine + ATP = glycyl-tRNA(Gly) + AMP + diphosphate. The sequence is that of Glycine--tRNA ligase alpha subunit from Petrotoga mobilis (strain DSM 10674 / SJ95).